Reading from the N-terminus, the 151-residue chain is Deoxyuridine 5'-triphosphate nucleotidohydrolase (151 aa).

Substrate is bound by residues 70-72 (RSG), Asn-83, 87-89 (LID), and Met-97.

The protein belongs to the dUTPase family. The cofactor is Mg(2+).

The enzyme catalyses dUTP + H2O = dUMP + diphosphate + H(+). Its pathway is pyrimidine metabolism; dUMP biosynthesis; dUMP from dCTP (dUTP route): step 2/2. Functionally, this enzyme is involved in nucleotide metabolism: it produces dUMP, the immediate precursor of thymidine nucleotides and it decreases the intracellular concentration of dUTP so that uracil cannot be incorporated into DNA. The sequence is that of Deoxyuridine 5'-triphosphate nucleotidohydrolase from Glaesserella parasuis serovar 5 (strain SH0165) (Haemophilus parasuis).